The sequence spans 452 residues: Pup--protein ligase (452 aa).

Position 9 (Glu9) interacts with Mg(2+). Arg53 provides a ligand contact to ATP. Tyr55 is a binding site for Mg(2+). The Proton acceptor role is filled by Asp57. Glu63 lines the Mg(2+) pocket. Residues Thr66 and Trp419 each coordinate ATP.

Belongs to the Pup ligase/Pup deamidase family. Pup-conjugating enzyme subfamily.

The enzyme catalyses ATP + [prokaryotic ubiquitin-like protein]-L-glutamate + [protein]-L-lysine = ADP + phosphate + N(6)-([prokaryotic ubiquitin-like protein]-gamma-L-glutamyl)-[protein]-L-lysine.. It participates in protein degradation; proteasomal Pup-dependent pathway. It functions in the pathway protein modification; protein pupylation. Functionally, catalyzes the covalent attachment of the prokaryotic ubiquitin-like protein modifier Pup to the proteasomal substrate proteins, thereby targeting them for proteasomal degradation. This tagging system is termed pupylation. The ligation reaction involves the side-chain carboxylate of the C-terminal glutamate of Pup and the side-chain amino group of a substrate lysine. This is Pup--protein ligase from Mycobacterium leprae (strain Br4923).